The following is an 819-amino-acid chain: MIMTESRAVIHLEPPAETSQEQADLLIVKVEEEDCSWMQGYNRPVLETFYQRFKHFQYHEAAGPRDALSQLRVLCCEWLRPELHTKEQILELLVLEQFLTILPEEFQAWVREHHPESGEEAVAVIESIQRELEERRQQIATSPEVLPQKMVPPGATQESFSHQCLPVEAQPERESQNLLEENALPVLQVSSVPLKDSQELTDSLLSDGPQKLVKTEDVADVAVSFILEEWAHLDQSQKSLGRDSRKEDCESTTPVDYEPKEGNLEFTVQQVSDAADPHWVAAERTEKNGVQRPESGEVSDLKDMVPRWQVNPTSGNPRQKRPLRSGPDVNRKQKSNGERGHRCGDCGKFFLQASNFIQHRRIHTGEKPFKCGECGKSYNQRVHLTQHQRVHTGEKPYKCQVCGKAFRVSSHLVQHHSVHSGERPYGCNECGKSFGRHSHLIEHLKRHFREKSQRCSDRRSKNTKLNIKQIPGLSEADLELSGEVQRNACQAEGHSEGCEHQDGQQGVVMKETLGQSSSKRTDCNEFSYVHKKSSPGERPHQCNECGKSFIQSAHLIQHRRIHTGEKPFRCEECGKSYNQRVHLTQHHRVHTGEKPYACHLCGKAFRVRSHLVQHQSVHSRERPFKCNECGKGFGRRSHLAGHLRLHSRDKSHQCHECGEIFFQYVSLLEHQVLHVGQKSEKNGICEEAYSWNLTVIKDKKLELQEQPYQCDSCGKAFSYSSDLIQHYRTHSAEKPQKCDACRDSTCQCPHIKQQQKSCPSGKSHQCNECGRGFSLKSHLSQHQRIHTGEKPLQCKECGMSFSWSCSLFKHLRSHERTDP.

The SCAN box domain maps to 51–132 (QRFKHFQYHE…AVIESIQREL (82 aa)). Glycyl lysine isopeptide (Lys-Gly) (interchain with G-Cter in SUMO2) cross-links involve residues K214, K246, and K302. In terms of domain architecture, KRAB spans 216 to 287 (EDVADVAVSF…HWVAAERTEK (72 aa)). Disordered regions lie at residues 236–263 (SQKS…KEGN) and 283–340 (ERTE…GERG). Residues 240 to 249 (LGRDSRKEDC) show a composition bias toward basic and acidic residues. Residues 329–340 (VNRKQKSNGERG) are compositionally biased toward basic and acidic residues. 9 C2H2-type zinc fingers span residues 341–363 (HRCG…RRIH), 369–391 (FKCG…QRVH), 397–419 (YKCQ…HSVH), 425–447 (YGCN…LKRH), 540–562 (HQCN…RRIH), 568–590 (FRCE…HRVH), 596–618 (YACH…QSVH), 624–646 (FKCN…LRLH), and 652–674 (HQCH…QVLH). K700 participates in a covalent cross-link: Glycyl lysine isopeptide (Lys-Gly) (interchain with G-Cter in SUMO2). 3 consecutive C2H2-type zinc fingers follow at residues 708–730 (YQCD…YRTH), 764–786 (HQCN…QRIH), and 792–814 (LQCK…LRSH). A Glycyl lysine isopeptide (Lys-Gly) (interchain with G-Cter in SUMO2) cross-link involves residue K776.

The protein belongs to the krueppel C2H2-type zinc-finger protein family. As to expression, testis specific.

The protein resides in the nucleus. Functionally, may be involved in transcriptional regulation. The chain is Zinc finger protein with KRAB and SCAN domains 5 (Zkscan5) from Mus musculus (Mouse).